We begin with the raw amino-acid sequence, 494 residues long: Protein nucleotidyltransferase YdiU (494 aa).

ATP is bound by residues Gly-90, Gly-92, Arg-93, Lys-113, Asp-125, Gly-126, Arg-176, and Arg-183. Catalysis depends on Asp-252, which acts as the Proton acceptor. Mg(2+)-binding residues include Asn-253 and Asp-262. An ATP-binding site is contributed by Asp-262.

The protein belongs to the SELO family. Requires Mg(2+) as cofactor. The cofactor is Mn(2+).

The enzyme catalyses L-seryl-[protein] + ATP = 3-O-(5'-adenylyl)-L-seryl-[protein] + diphosphate. The catalysed reaction is L-threonyl-[protein] + ATP = 3-O-(5'-adenylyl)-L-threonyl-[protein] + diphosphate. It carries out the reaction L-tyrosyl-[protein] + ATP = O-(5'-adenylyl)-L-tyrosyl-[protein] + diphosphate. It catalyses the reaction L-histidyl-[protein] + UTP = N(tele)-(5'-uridylyl)-L-histidyl-[protein] + diphosphate. The enzyme catalyses L-seryl-[protein] + UTP = O-(5'-uridylyl)-L-seryl-[protein] + diphosphate. The catalysed reaction is L-tyrosyl-[protein] + UTP = O-(5'-uridylyl)-L-tyrosyl-[protein] + diphosphate. Its function is as follows. Nucleotidyltransferase involved in the post-translational modification of proteins. It can catalyze the addition of adenosine monophosphate (AMP) or uridine monophosphate (UMP) to a protein, resulting in modifications known as AMPylation and UMPylation. The protein is Protein nucleotidyltransferase YdiU of Alkalilimnicola ehrlichii (strain ATCC BAA-1101 / DSM 17681 / MLHE-1).